A 108-amino-acid chain; its full sequence is Large ribosomal subunit protein uL24 (108 aa).

This sequence belongs to the universal ribosomal protein uL24 family. In terms of assembly, part of the 50S ribosomal subunit.

In terms of biological role, one of two assembly initiator proteins, it binds directly to the 5'-end of the 23S rRNA, where it nucleates assembly of the 50S subunit. Functionally, one of the proteins that surrounds the polypeptide exit tunnel on the outside of the subunit. The chain is Large ribosomal subunit protein uL24 from Salinispora tropica (strain ATCC BAA-916 / DSM 44818 / JCM 13857 / NBRC 105044 / CNB-440).